Here is a 185-residue protein sequence, read N- to C-terminus: UPF0301 protein HCH_00550 (185 aa).

It belongs to the UPF0301 (AlgH) family.

This Hahella chejuensis (strain KCTC 2396) protein is UPF0301 protein HCH_00550.